The chain runs to 362 residues: GTP cyclohydrolase FolE2 (362 aa).

It belongs to the GTP cyclohydrolase IV family.

It carries out the reaction GTP + H2O = 7,8-dihydroneopterin 3'-triphosphate + formate + H(+). It participates in cofactor biosynthesis; 7,8-dihydroneopterin triphosphate biosynthesis; 7,8-dihydroneopterin triphosphate from GTP: step 1/1. In terms of biological role, converts GTP to 7,8-dihydroneopterin triphosphate. This is GTP cyclohydrolase FolE2 from Jannaschia sp. (strain CCS1).